The sequence spans 364 residues: 3-isopropylmalate dehydrogenase (364 aa).

78–91 (GKKWDYLSIDKRPE) is a binding site for NAD(+). Positions 99, 109, 138, and 227 each coordinate substrate. The Mg(2+) site is built by Asp-227, Asp-251, and Asp-255. NAD(+) is bound at residue 285–297 (GSAPDIAGKNIAN).

The protein belongs to the isocitrate and isopropylmalate dehydrogenases family. LeuB type 1 subfamily. Homodimer. Requires Mg(2+) as cofactor. It depends on Mn(2+) as a cofactor.

It localises to the cytoplasm. It carries out the reaction (2R,3S)-3-isopropylmalate + NAD(+) = 4-methyl-2-oxopentanoate + CO2 + NADH. It participates in amino-acid biosynthesis; L-leucine biosynthesis; L-leucine from 3-methyl-2-oxobutanoate: step 3/4. Catalyzes the oxidation of 3-carboxy-2-hydroxy-4-methylpentanoate (3-isopropylmalate) to 3-carboxy-4-methyl-2-oxopentanoate. The product decarboxylates to 4-methyl-2 oxopentanoate. The sequence is that of 3-isopropylmalate dehydrogenase from Buchnera aphidicola subsp. Uroleucon erigeronensis.